Consider the following 357-residue polypeptide: uncharacterized protein (357 aa).

This is an uncharacterized protein from Caenorhabditis elegans.